A 226-amino-acid chain; its full sequence is 2-C-methyl-D-erythritol 4-phosphate cytidylyltransferase (226 aa).

This sequence belongs to the IspD/TarI cytidylyltransferase family. IspD subfamily.

The catalysed reaction is 2-C-methyl-D-erythritol 4-phosphate + CTP + H(+) = 4-CDP-2-C-methyl-D-erythritol + diphosphate. The protein operates within isoprenoid biosynthesis; isopentenyl diphosphate biosynthesis via DXP pathway; isopentenyl diphosphate from 1-deoxy-D-xylulose 5-phosphate: step 2/6. Its function is as follows. Catalyzes the formation of 4-diphosphocytidyl-2-C-methyl-D-erythritol from CTP and 2-C-methyl-D-erythritol 4-phosphate (MEP). The polypeptide is 2-C-methyl-D-erythritol 4-phosphate cytidylyltransferase (Bacillus cereus (strain ATCC 14579 / DSM 31 / CCUG 7414 / JCM 2152 / NBRC 15305 / NCIMB 9373 / NCTC 2599 / NRRL B-3711)).